Consider the following 165-residue polypeptide: Nucleotide-binding protein PMT9312_0481 (165 aa).

It belongs to the YajQ family.

In terms of biological role, nucleotide-binding protein. This is Nucleotide-binding protein PMT9312_0481 from Prochlorococcus marinus (strain MIT 9312).